Reading from the N-terminus, the 141-residue chain is ATP synthase epsilon chain (141 aa).

It belongs to the ATPase epsilon chain family. In terms of assembly, F-type ATPases have 2 components, CF(1) - the catalytic core - and CF(0) - the membrane proton channel. CF(1) has five subunits: alpha(3), beta(3), gamma(1), delta(1), epsilon(1). CF(0) has three main subunits: a, b and c.

The protein resides in the cell inner membrane. Functionally, produces ATP from ADP in the presence of a proton gradient across the membrane. This Azoarcus sp. (strain BH72) protein is ATP synthase epsilon chain.